The sequence spans 252 residues: Expansin-A12 (252 aa).

The first 23 residues, 1 to 23 (MDMKGTYLVTVILLVSTLSVGMC), serve as a signal peptide directing secretion. Residues 45–156 (GGACGYDNPY…RRVGCKRRGG (112 aa)) enclose the Expansin-like EG45 domain. Positions 166-246 (NFNMVMISNV…SWWFGQTFSS (81 aa)) constitute an Expansin-like CBD domain.

The protein belongs to the expansin family. Expansin A subfamily.

It localises to the secreted. The protein localises to the cell wall. It is found in the membrane. Its function is as follows. Causes loosening and extension of plant cell walls by disrupting non-covalent bonding between cellulose microfibrils and matrix glucans. No enzymatic activity has been found. This is Expansin-A12 (EXPA12) from Arabidopsis thaliana (Mouse-ear cress).